Here is a 242-residue protein sequence, read N- to C-terminus: UPF0273 protein TM_0370 (242 aa).

The KaiC domain maps to 3–242 (KRVKTGIPGM…IYPSEGGEGR (240 aa)). 30-37 (GGPGTGKT) provides a ligand contact to ATP.

The protein belongs to the UPF0273 family.

The chain is UPF0273 protein TM_0370 from Thermotoga maritima (strain ATCC 43589 / DSM 3109 / JCM 10099 / NBRC 100826 / MSB8).